The chain runs to 204 residues: Large ribosomal subunit protein uL4 (204 aa).

The interval 52–76 is disordered; it reads AEVRGGGKKPWAQKGGGRARAGSRR.

The protein belongs to the universal ribosomal protein uL4 family. In terms of assembly, part of the 50S ribosomal subunit.

One of the primary rRNA binding proteins, this protein initially binds near the 5'-end of the 23S rRNA. It is important during the early stages of 50S assembly. It makes multiple contacts with different domains of the 23S rRNA in the assembled 50S subunit and ribosome. In terms of biological role, forms part of the polypeptide exit tunnel. The sequence is that of Large ribosomal subunit protein uL4 from Sulfurimonas denitrificans (strain ATCC 33889 / DSM 1251) (Thiomicrospira denitrificans (strain ATCC 33889 / DSM 1251)).